A 307-amino-acid polypeptide reads, in one-letter code: Oxygen-dependent coproporphyrinogen-III oxidase (307 aa).

Residue Ser-99 participates in substrate binding. Positions 103 and 113 each coordinate a divalent metal cation. His-113 acts as the Proton donor in catalysis. 115–117 (NVR) provides a ligand contact to substrate. Residues His-152 and His-182 each coordinate a divalent metal cation. The interval 247-282 (YVEFNLVFDRGTLFGLQSGGRTESILMSMPPVANWR) is important for dimerization. A substrate-binding site is contributed by 265-267 (GGR).

This sequence belongs to the aerobic coproporphyrinogen-III oxidase family. As to quaternary structure, homodimer. Requires a divalent metal cation as cofactor.

The protein resides in the cytoplasm. It catalyses the reaction coproporphyrinogen III + O2 + 2 H(+) = protoporphyrinogen IX + 2 CO2 + 2 H2O. It participates in porphyrin-containing compound metabolism; protoporphyrin-IX biosynthesis; protoporphyrinogen-IX from coproporphyrinogen-III (O2 route): step 1/1. In terms of biological role, involved in the heme biosynthesis. Catalyzes the aerobic oxidative decarboxylation of propionate groups of rings A and B of coproporphyrinogen-III to yield the vinyl groups in protoporphyrinogen-IX. This chain is Oxygen-dependent coproporphyrinogen-III oxidase, found in Burkholderia lata (strain ATCC 17760 / DSM 23089 / LMG 22485 / NCIMB 9086 / R18194 / 383).